Consider the following 337-residue polypeptide: Follistatin (337 aa).

The N-terminal stretch at P1–A22 is a signal peptide. A TB domain is found at G23–G96. Intrachain disulfides connect C25–C48, C35–C81, C49–C84, C88–C99, C93–C109, C111–C143, C115–C136, C125–C157, C161–C172, C166–C182, C185–C218, C189–C211, C200–C232, C238–C249, C243–C260, C263–C295, C267–C288, and C277–C309. The Follistatin-like 1 domain maps to T87 to V110. The Kazal-like 1 domain maps to N105–K159. N-linked (GlcNAc...) asparagine glycosylation occurs at N117. The region spanning T160–V183 is the Follistatin-like 2 domain. A Kazal-like 2 domain is found at N179–K234. Residues S237–S261 enclose the Follistatin-like 3 domain. A Kazal-like 3 domain is found at K254–S311. N-linked (GlcNAc...) asparagine glycosylation is present at N281. The interval C309–W337 is disordered. A compositionally biased stretch (acidic residues) spans E314–D326.

As to quaternary structure, monomer.

The protein resides in the secreted. Binds directly to activin and functions as an activin antagonist. Specific inhibitor of the biosynthesis and secretion of pituitary follicle stimulating hormone (FSH). The chain is Follistatin from Ovis aries (Sheep).